Here is a 312-residue protein sequence, read N- to C-terminus: Acetyl-coenzyme A carboxylase carboxyl transferase subunit alpha (312 aa).

The CoA carboxyltransferase C-terminal domain occupies 32-286 (LLEERLARLR…KEALLKALEE (255 aa)).

It belongs to the AccA family. In terms of assembly, acetyl-CoA carboxylase is a heterohexamer composed of biotin carboxyl carrier protein (AccB), biotin carboxylase (AccC) and two subunits each of ACCase subunit alpha (AccA) and ACCase subunit beta (AccD).

The protein localises to the cytoplasm. The catalysed reaction is N(6)-carboxybiotinyl-L-lysyl-[protein] + acetyl-CoA = N(6)-biotinyl-L-lysyl-[protein] + malonyl-CoA. It participates in lipid metabolism; malonyl-CoA biosynthesis; malonyl-CoA from acetyl-CoA: step 1/1. Functionally, component of the acetyl coenzyme A carboxylase (ACC) complex. First, biotin carboxylase catalyzes the carboxylation of biotin on its carrier protein (BCCP) and then the CO(2) group is transferred by the carboxyltransferase to acetyl-CoA to form malonyl-CoA. This chain is Acetyl-coenzyme A carboxylase carboxyl transferase subunit alpha, found in Thermus thermophilus (strain ATCC BAA-163 / DSM 7039 / HB27).